Reading from the N-terminus, the 370-residue chain is DNA replication and repair protein RecF (370 aa).

An ATP-binding site is contributed by 30–37 (GENAQGKT).

This sequence belongs to the RecF family.

Its subcellular location is the cytoplasm. Its function is as follows. The RecF protein is involved in DNA metabolism; it is required for DNA replication and normal SOS inducibility. RecF binds preferentially to single-stranded, linear DNA. It also seems to bind ATP. The protein is DNA replication and repair protein RecF of Staphylococcus aureus (strain bovine RF122 / ET3-1).